The primary structure comprises 246 residues: MTFTILPAVDVVNGQAVRLDQGEAGTEKSYGTPLESALRWQEQGAEWLHFVDLDAAFNRGSNHELMAEITRQLDIKVELTGGIRDDASLERALATGATRVNIGTAALEKPEWIADVIRRHGEKIAVDIAVRLENGEWRTKGNGWVSDGGDLWEVLERLDSQGCSRFVVTDVSKDGTLTGPNVDLLRDVAAATDAPIVASGGISTLEDVLGLAKYQDEGIDSVIIGKALYEHRFTLAEALEAVEKLG.

Catalysis depends on D10, which acts as the Proton acceptor.

It belongs to the HisA/HisF family.

The protein localises to the cytoplasm. It catalyses the reaction 1-(5-phospho-beta-D-ribosyl)-5-[(5-phospho-beta-D-ribosylamino)methylideneamino]imidazole-4-carboxamide = 5-[(5-phospho-1-deoxy-D-ribulos-1-ylimino)methylamino]-1-(5-phospho-beta-D-ribosyl)imidazole-4-carboxamide. Its pathway is amino-acid biosynthesis; L-histidine biosynthesis; L-histidine from 5-phospho-alpha-D-ribose 1-diphosphate: step 4/9. This is 1-(5-phosphoribosyl)-5-[(5-phosphoribosylamino)methylideneamino] imidazole-4-carboxamide isomerase from Corynebacterium efficiens (strain DSM 44549 / YS-314 / AJ 12310 / JCM 11189 / NBRC 100395).